A 144-amino-acid polypeptide reads, in one-letter code: D-aminoacyl-tRNA deacylase (144 aa).

The Gly-cisPro motif, important for rejection of L-amino acids motif lies at 136-137 (GP).

Belongs to the DTD family. In terms of assembly, homodimer.

Its subcellular location is the cytoplasm. It catalyses the reaction glycyl-tRNA(Ala) + H2O = tRNA(Ala) + glycine + H(+). It carries out the reaction a D-aminoacyl-tRNA + H2O = a tRNA + a D-alpha-amino acid + H(+). An aminoacyl-tRNA editing enzyme that deacylates mischarged D-aminoacyl-tRNAs. Also deacylates mischarged glycyl-tRNA(Ala), protecting cells against glycine mischarging by AlaRS. Acts via tRNA-based rather than protein-based catalysis; rejects L-amino acids rather than detecting D-amino acids in the active site. By recycling D-aminoacyl-tRNA to D-amino acids and free tRNA molecules, this enzyme counteracts the toxicity associated with the formation of D-aminoacyl-tRNA entities in vivo and helps enforce protein L-homochirality. The chain is D-aminoacyl-tRNA deacylase from Corynebacterium glutamicum (strain R).